The chain runs to 161 residues: Ribonuclease H (161 aa).

An RNase H type-1 domain is found at 1-142 (MLKLVKMFSD…CDKIARQSAQ (142 aa)). Mg(2+) contacts are provided by aspartate 10, glutamate 48, aspartate 70, and aspartate 134.

The protein belongs to the RNase H family. As to quaternary structure, monomer. Mg(2+) is required as a cofactor.

It localises to the cytoplasm. It carries out the reaction Endonucleolytic cleavage to 5'-phosphomonoester.. Its function is as follows. Endonuclease that specifically degrades the RNA of RNA-DNA hybrids. The protein is Ribonuclease H (rnhA) of Buchnera aphidicola subsp. Schizaphis graminum (strain Sg).